The following is a 783-amino-acid chain: Probable alpha,alpha-trehalose-phosphate synthase [UDP-forming] 3 (783 aa).

The interval 11–456 is glycosyltransferase; the sequence is QTLLVVANRL…GFDFLSELND (446 aa).

It in the N-terminal section; belongs to the glycosyltransferase 20 family. This sequence in the C-terminal section; belongs to the trehalose phosphatase family.

The enzyme catalyses D-glucose 6-phosphate + UDP-alpha-D-glucose = alpha,alpha-trehalose 6-phosphate + UDP + H(+). In Arabidopsis thaliana (Mouse-ear cress), this protein is Probable alpha,alpha-trehalose-phosphate synthase [UDP-forming] 3 (TPS3).